A 308-amino-acid chain; its full sequence is MNTQAKLVNELKNITTEGQNPNTLDIDLLDSLGVLKKINTEDQKVASIVGLLLPEISQGVDLIVDAFACGGRLIYIGAGTSGRLGVLDAVECPPTFSVSSEQVIGILAGGAGAMYKAVEGAEDNRQLAIDDLKAINLSSKDIVVGIAASGRTPYVISGMAFAREQGAKVIGVSCSANSSYAQNCDINICAVVGAEVLTGSTRMKSGTAQKLILNMLSTASMIRSGKSYQNLMIDVNASNKKLYARAVRIVMQATECDFDTAEMALAQANNQTKLASLMVLTGLDSTQAKAALASNKGFLRKAVEQQGC.

One can recognise an SIS domain in the interval 63-226; sequence IVDAFACGGR…STASMIRSGK (164 aa). Catalysis depends on Glu-91, which acts as the Proton donor. Residue Glu-122 is part of the active site.

Belongs to the GCKR-like family. MurNAc-6-P etherase subfamily. Homodimer.

The enzyme catalyses N-acetyl-D-muramate 6-phosphate + H2O = N-acetyl-D-glucosamine 6-phosphate + (R)-lactate. It participates in amino-sugar metabolism; 1,6-anhydro-N-acetylmuramate degradation. Its pathway is amino-sugar metabolism; N-acetylmuramate degradation. It functions in the pathway cell wall biogenesis; peptidoglycan recycling. In terms of biological role, specifically catalyzes the cleavage of the D-lactyl ether substituent of MurNAc 6-phosphate, producing GlcNAc 6-phosphate and D-lactate. Together with AnmK, is also required for the utilization of anhydro-N-acetylmuramic acid (anhMurNAc) either imported from the medium or derived from its own cell wall murein, and thus plays a role in cell wall recycling. In Colwellia psychrerythraea (strain 34H / ATCC BAA-681) (Vibrio psychroerythus), this protein is N-acetylmuramic acid 6-phosphate etherase.